The following is a 67-amino-acid chain: Conotoxin Cl6.6b (67 aa).

The first 24 residues, 1-24 (MKLTCVLIAAVLLLAVCQLDSADA), serve as a signal peptide directing secretion. Positions 25–37 (TGYMRKNPSLRSP) are excised as a propeptide. Disulfide bonds link cysteine 43-cysteine 57, cysteine 50-cysteine 61, and cysteine 56-cysteine 65.

It belongs to the conotoxin O1 superfamily. As to expression, expressed by the venom duct.

The protein localises to the secreted. The protein is Conotoxin Cl6.6b of Californiconus californicus (California cone).